Consider the following 276-residue polypeptide: Ribonuclease 3 (276 aa).

The RNase III domain occupies 30–161; it reads LTAFIRSLFK…LTGAIYLDRG (132 aa). Mg(2+) is bound at residue glutamate 74. Aspartate 78 is an active-site residue. Positions 147 and 150 each coordinate Mg(2+). Residue glutamate 150 is part of the active site. The DRBM domain maps to 188-257; sequence NHKSRLIEHT…AEEAMGALER (70 aa).

This sequence belongs to the ribonuclease III family. Homodimer. It depends on Mg(2+) as a cofactor.

It localises to the cytoplasm. It carries out the reaction Endonucleolytic cleavage to 5'-phosphomonoester.. In terms of biological role, digests double-stranded RNA. Involved in the processing of primary rRNA transcript to yield the immediate precursors to the large and small rRNAs (23S and 16S). Processes some mRNAs, and tRNAs when they are encoded in the rRNA operon. Processes pre-crRNA and tracrRNA of type II CRISPR loci if present in the organism. This Chlorobium luteolum (strain DSM 273 / BCRC 81028 / 2530) (Pelodictyon luteolum) protein is Ribonuclease 3.